The sequence spans 2517 residues: Non-reducing polyketide synthase pkbA (2517 aa).

An N-terminal acylcarrier protein transacylase domain (SAT) region spans residues 59-250 (LERVAGPAEK…KRFDLRGRFH (192 aa)). Residues 380-775 (SEPIAIIGMG…SANTVSSLKE (396 aa)) enclose the Ketosynthase family 3 (KS3) domain. Residues cysteine 547, histidine 682, and histidine 721 each act as for beta-ketoacyl synthase activity in the active site. Positions 849 to 1158 (AFGGQVARSV…TGTAALADAT (310 aa)) are malonyl-CoA:ACP transacylase (MAT) domain. Serine 935 (for acyl/malonyl transferase activity) is an active-site residue. The interval 1221 to 1353 (EEFLTFVKYK…GTVVLRENDT (133 aa)) is N-terminal hotdog fold. In terms of domain architecture, PKS/mFAS DH spans 1221-1530 (EEFLTFVKYK…FTRVQISSLG (310 aa)). Residues 1251 to 1525 (FVKGHAVLAE…ILGAHFTRVQ (275 aa)) are product template (PT) domain. The Proton acceptor; for dehydratase activity role is filled by histidine 1255. Residues 1379-1530 (DCHILQGPVV…FTRVQISSLG (152 aa)) form a C-terminal hotdog fold region. The active-site Proton donor; for dehydratase activity is aspartate 1437. Residues 1574–1651 (RPTLEISEKL…SISKCLASYL (78 aa)) enclose the Carrier 1 domain. At serine 1611 the chain carries O-(pantetheine 4'-phosphoryl)serine. Residues 1659–1684 (QPEDLADADSVESDSDMPTGAVTSGI) are disordered. The span at 1662–1673 (DLADADSVESDS) shows a compositional bias: acidic residues. Positions 1685 to 1761 (TTPDDAVSRL…DLIALVPALN (77 aa)) constitute a Carrier 2 domain. Serine 1721 carries the post-translational modification O-(pantetheine 4'-phosphoryl)serine. The tract at residues 1976–2075 (LELGGGTGGT…IHRMLRPDGF (100 aa)) is methyltransferase (CMeT) domain. Residues 2200-2514 (LMIHGGGHIM…RGYDFLKEEV (315 aa)) form a thioesterase (TE) domain region.

Requires pantetheine 4'-phosphate as cofactor.

The catalysed reaction is 3 malonyl-CoA + acetyl-CoA + S-adenosyl-L-methionine + H(+) = 3-methylorsellinate + S-adenosyl-L-homocysteine + 3 CO2 + 4 CoA. Its pathway is phytotoxin biosynthesis. In terms of biological role, non-reducing polyketide synthase; part of the gene cluster that mediates the biosynthesis of cichorine, a phytotoxin active against knapweed, corn, and soybeans. The first step in the pathway is performed by the non-reducing polyketide synthase pkbA that condenses one acetyl-CoA starter unit with 3 malonyl-CoA units. PkbA also catalyzes one methylation step to produce 3-methylorsellinate. The nonribosomal peptide synthase-like protein cicB, the cytochrome P450 monooxygenase cicH and the O-methyltransferase cicE are involved in the conversion of 3-methylorsellinate into nidulol. CicB converts 3-methylorsellinate to a yet unidentified intermediate, cicH may play a ring-closing role for cichorine and cicE is plausibly responsible for the methylation of one of the phenol groups. The oxidoreductase cicC acts downstream with still unidentified enzymes to further convert nidulol into cichorin. This is Non-reducing polyketide synthase pkbA from Emericella nidulans (strain FGSC A4 / ATCC 38163 / CBS 112.46 / NRRL 194 / M139) (Aspergillus nidulans).